Consider the following 329-residue polypeptide: Sideroflexin (329 aa).

Transmembrane regions (helical) follow at residues 95 to 115 (AFLP…ASIG), 147 to 167 (ILEA…GLGW), 183 to 203 (LRMM…VLIM), 238 to 258 (FSRA…MGLF), and 274 to 294 (LNLA…IALF).

It belongs to the sideroflexin family.

It localises to the mitochondrion membrane. In terms of biological role, mitochondrial amino-acid transporter that mediates transport of serine into mitochondria. In Dictyostelium discoideum (Social amoeba), this protein is Sideroflexin.